We begin with the raw amino-acid sequence, 97 residues long: Protein SENESCENCE-ASSOCIATED GENE 21, mitochondrial (97 aa).

A mitochondrion-targeting transit peptide spans 1–46 (MARSISNVKIVSAFVSRELSNAIFRRGYAATAAQGSVSSGGRSGAV).

The protein belongs to the LEA type 3 family. As to expression, expressed in roots, stems leaves and flowers, but not in seeds. In short days, observed in cotyledons and roots but absent from rosette leaves.

The protein localises to the mitochondrion. Functionally, mediates tolerance to oxidative stresses (e.g. hydrogen peroxide H(2)O(2), diamide, menadione and tert-butyl hydroperoxide) by minimizing the negative effects of oxidation and monitoring photosynthesis during stress. Promotes root development. Prevents premature aging (e.g. senescence and flowering). Involved in resistance against compatible pathogens such as Botrytis cinerea and Pseudomonas syringae pv. tomato. The chain is Protein SENESCENCE-ASSOCIATED GENE 21, mitochondrial from Arabidopsis thaliana (Mouse-ear cress).